Consider the following 408-residue polypeptide: Arginine biosynthesis bifunctional protein ArgJ (408 aa).

Residues Thr-158, Lys-184, Thr-195, Glu-281, Asn-403, and Thr-408 each coordinate substrate. Residue Thr-195 is the Nucleophile of the active site.

Belongs to the ArgJ family. Heterotetramer of two alpha and two beta chains.

The protein localises to the cytoplasm. It carries out the reaction N(2)-acetyl-L-ornithine + L-glutamate = N-acetyl-L-glutamate + L-ornithine. It catalyses the reaction L-glutamate + acetyl-CoA = N-acetyl-L-glutamate + CoA + H(+). Its pathway is amino-acid biosynthesis; L-arginine biosynthesis; L-ornithine and N-acetyl-L-glutamate from L-glutamate and N(2)-acetyl-L-ornithine (cyclic): step 1/1. The protein operates within amino-acid biosynthesis; L-arginine biosynthesis; N(2)-acetyl-L-ornithine from L-glutamate: step 1/4. Its function is as follows. Catalyzes two activities which are involved in the cyclic version of arginine biosynthesis: the synthesis of N-acetylglutamate from glutamate and acetyl-CoA as the acetyl donor, and of ornithine by transacetylation between N(2)-acetylornithine and glutamate. This Bacillus cereus (strain ATCC 14579 / DSM 31 / CCUG 7414 / JCM 2152 / NBRC 15305 / NCIMB 9373 / NCTC 2599 / NRRL B-3711) protein is Arginine biosynthesis bifunctional protein ArgJ.